A 356-amino-acid polypeptide reads, in one-letter code: Chorismate synthase (356 aa).

NADP(+)-binding residues include arginine 48 and arginine 54. FMN is bound by residues arginine 125 to serine 127, asparagine 237 to alanine 238, glycine 282, lysine 297 to serine 301, and arginine 323.

The protein belongs to the chorismate synthase family. In terms of assembly, homotetramer. The cofactor is FMNH2.

The enzyme catalyses 5-O-(1-carboxyvinyl)-3-phosphoshikimate = chorismate + phosphate. It participates in metabolic intermediate biosynthesis; chorismate biosynthesis; chorismate from D-erythrose 4-phosphate and phosphoenolpyruvate: step 7/7. In terms of biological role, catalyzes the anti-1,4-elimination of the C-3 phosphate and the C-6 proR hydrogen from 5-enolpyruvylshikimate-3-phosphate (EPSP) to yield chorismate, which is the branch point compound that serves as the starting substrate for the three terminal pathways of aromatic amino acid biosynthesis. This reaction introduces a second double bond into the aromatic ring system. This chain is Chorismate synthase, found in Rhizorhabdus wittichii (strain DSM 6014 / CCUG 31198 / JCM 15750 / NBRC 105917 / EY 4224 / RW1) (Sphingomonas wittichii).